The primary structure comprises 405 residues: Phosphoglycerate kinase (405 aa).

Residues 21-23, R36, 59-62, R119, and R161 each bind substrate; these read DFN and HLGR. ATP-binding positions include K212, G301, E332, and 361-364; that span reads GGDS.

This sequence belongs to the phosphoglycerate kinase family. In terms of assembly, monomer.

The protein localises to the cytoplasm. The catalysed reaction is (2R)-3-phosphoglycerate + ATP = (2R)-3-phospho-glyceroyl phosphate + ADP. Its pathway is carbohydrate degradation; glycolysis; pyruvate from D-glyceraldehyde 3-phosphate: step 2/5. This is Phosphoglycerate kinase from Leuconostoc mesenteroides subsp. mesenteroides (strain ATCC 8293 / DSM 20343 / BCRC 11652 / CCM 1803 / JCM 6124 / NCDO 523 / NBRC 100496 / NCIMB 8023 / NCTC 12954 / NRRL B-1118 / 37Y).